Reading from the N-terminus, the 345-residue chain is Membrane progestin receptor alpha (345 aa).

Over 1 to 74 (MAMAVAQKFN…FQRHNEAVNV (74 aa)) the chain is Cytoplasmic. The helical transmembrane segment at 75–95 (WTHLLAALALLLRLIGLAASV) threads the bilayer. The Extracellular segment spans residues 96–102 (DFREDPH). Residues 103–123 (ALPLFFIVLASFTYLSFSAVA) form a helical membrane-spanning segment. Over 124–136 (HLLQAKSEFWHYS) the chain is Cytoplasmic. The helical transmembrane segment at 137–157 (FFFLDYVGVAVYQFGSALAHF) threads the bilayer. Residues 158–168 (YYAIEPSWHDK) lie on the Extracellular side of the membrane. Residues 169-189 (VQAIFLPTAAFLAWLSCAGSC) form a helical membrane-spanning segment. The Cytoplasmic segment spans residues 190–243 (YNKYSQKPGLLGRIFQEAPSALAYVLDISPVLHRIIVSPLPAEEDPALLYHKCQ). The chain crosses the membrane as a helical span at residues 244 to 264 (VVFFLLAAAFFSTVMPESWFP). Residues 265-268 (GSCH) are Extracellular-facing. The chain crosses the membrane as a helical span at residues 269–289 (IFGQGHQVFHVFLVLCTLAQL). Residues 290-315 (EAVTLDYQARRGIYEPLHARWPHNFS) are Cytoplasmic-facing. The helical transmembrane segment at 316 to 336 (GLFLLTVASSSLTALLLSQLV) threads the bilayer. Residues 337-345 (RRKLHQKTK) lie on the Extracellular side of the membrane.

It belongs to the ADIPOR family. Detected in most adult tissues. Higher expression found in white fat and liver than brown fat and skeletal muscle.

The protein localises to the cell membrane. Plasma membrane progesterone (P4) receptor coupled to G proteins. Seems to act through a G(i) mediated pathway. May be involved in oocyte maturation. Involved in neurosteroid inhibition of apoptosis. Also binds dehydroepiandrosterone (DHEA), pregnanolone, pregnenolone and allopregnanolone. The sequence is that of Membrane progestin receptor alpha from Mus musculus (Mouse).